We begin with the raw amino-acid sequence, 85 residues long: MMSKTGALLLTFMILVLFSMAAADALGERFEDHEQKIREQDAGVGLLSLMGRAVIECSKCDTDCKTQKGCIPVAKTTNNPTYCIC.

The first 21 residues, 1–21, serve as a signal peptide directing secretion; sequence MMSKTGALLLTFMILVLFSMA. Positions 22 to 52 are excised as a propeptide; the sequence is AADALGERFEDHEQKIREQDAGVGLLSLMGR.

Post-translationally, contains 3 disulfide bonds. In terms of tissue distribution, expressed by the venom duct.

The protein localises to the secreted. The polypeptide is Teretoxin Tan9.6 (Terebra anilis (Auger snail)).